A 294-amino-acid chain; its full sequence is 4-hydroxy-tetrahydrodipicolinate synthase (294 aa).

T47 lines the pyruvate pocket. The active-site Proton donor/acceptor is Y135. K163 functions as the Schiff-base intermediate with substrate in the catalytic mechanism. T205 provides a ligand contact to pyruvate.

The protein belongs to the DapA family. Homotetramer; dimer of dimers.

It localises to the cytoplasm. The catalysed reaction is L-aspartate 4-semialdehyde + pyruvate = (2S,4S)-4-hydroxy-2,3,4,5-tetrahydrodipicolinate + H2O + H(+). Its pathway is amino-acid biosynthesis; L-lysine biosynthesis via DAP pathway; (S)-tetrahydrodipicolinate from L-aspartate: step 3/4. Catalyzes the condensation of (S)-aspartate-beta-semialdehyde [(S)-ASA] and pyruvate to 4-hydroxy-tetrahydrodipicolinate (HTPA). In Rickettsia akari (strain Hartford), this protein is 4-hydroxy-tetrahydrodipicolinate synthase.